A 129-amino-acid chain; its full sequence is Follitropin subunit beta (129 aa).

The signal sequence occupies residues 1–18 (MKSVQLCLLLWCWRAICC). 6 disulfide bridges follow: Cys21–Cys69, Cys35–Cys84, Cys38–Cys122, Cys46–Cys100, Cys50–Cys102, and Cys105–Cys112. 2 N-linked (GlcNAc...) asparagine glycosylation sites follow: Asn25 and Asn42.

Belongs to the glycoprotein hormones subunit beta family. Heterodimer. The active follitropin is a heterodimer composed of an alpha chain/CGA shared with other hormones and a unique beta chain/FSHB shown here.

The protein localises to the secreted. Its function is as follows. Together with the alpha chain CGA constitutes follitropin, the follicle-stimulating hormone, and provides its biological specificity to the hormone heterodimer. Binds FSHR, a G protein-coupled receptor, on target cells to activate downstream signaling pathways. Follitropin is involved in follicle development and spermatogenesis in reproductive organs. This Meriones unguiculatus (Mongolian jird) protein is Follitropin subunit beta (FSHB).